The sequence spans 195 residues: Pyruvoyl-dependent arginine decarboxylase AaxB (195 aa).

The residue at position 53 (Ser53) is a Pyruvic acid (Ser).

It belongs to the pyruvoyl-dependent arginine decarboxylase family. In terms of assembly, trimer of an alpha-beta dimer. The cofactor is pyruvate.

It localises to the cytoplasm. It catalyses the reaction L-arginine + H(+) = agmatine + CO2. Part of the AaxABC system, catalyzes the decarboxylation of L-arginine. The arginine uptake by the bacterium in the macrophage may be a virulence factor against the host innate immune response. The protein is Pyruvoyl-dependent arginine decarboxylase AaxB (aaxB) of Chlamydia trachomatis serovar D (strain ATCC VR-885 / DSM 19411 / UW-3/Cx).